Here is a 215-residue protein sequence, read N- to C-terminus: Putative B3 domain-containing protein Os11g0625400 (215 aa).

The TF-B3 1 DNA-binding region spans 1 to 51; the sequence is MTVELEKIAGSFFISKGWKTFVHRTGLLSGQYIRFQVLTPSKINVLLFDKK. Residues 92–117 form a disordered region; it reads SHTSNKETSSDSRTESMTDIPSSSDN. A compositionally biased stretch (basic and acidic residues) spans 95 to 107; sequence SNKETSSDSRTES. Residues 108-117 show a composition bias toward polar residues; it reads MTDIPSSSDN. Positions 123–215 form a DNA-binding region, TF-B3 2; sequence DIKNYISIIG…PNVKITIDVL (93 aa).

It localises to the nucleus. The chain is Putative B3 domain-containing protein Os11g0625400 from Oryza sativa subsp. japonica (Rice).